The chain runs to 420 residues: Protein disulfide isomerase CRELD1 (420 aa).

An N-terminal signal peptide occupies residues methionine 1–leucine 29. Residues glutamine 30–glutamate 362 are Extracellular-facing. The CXXC signature appears at cysteine 46–cysteine 49. Cysteine 46 and cysteine 49 are oxidised to a cystine. An N-linked (GlcNAc...) asparagine glycan is attached at asparagine 79. One can recognise an EGF-like 1 domain in the interval leucine 153 to glycine 193. Disulfide bonds link cysteine 155–cysteine 169, cysteine 163–cysteine 181, and cysteine 183–cysteine 192. Asparagine 205 carries an N-linked (GlcNAc...) asparagine glycan. FU repeat units follow at residues histidine 208–cysteine 256 and serine 268–proline 315. The CXXC signature appears at cysteine 278–cysteine 281. 4 disulfides stabilise this stretch: cysteine 278–cysteine 281, cysteine 309–cysteine 321, cysteine 314–cysteine 330, and cysteine 332–cysteine 343. The 40-residue stretch at aspartate 305–valine 344 folds into the EGF-like 2; calcium-binding domain. The helical transmembrane segment at leucine 363–alanine 383 threads the bilayer. Lysine 384 is a topological domain (cytoplasmic). The chain crosses the membrane as a helical span at residues glycine 385–leucine 405. Topologically, residues serine 406–arginine 420 are extracellular.

Belongs to the CRELD family. Highly expressed in fetal lung, liver, kidney, adult heart, brain and skeletal muscle. Weakly expressed in placenta, fetal brain, and adult lung, liver, kidney and pancreas.

It localises to the membrane. It catalyses the reaction Catalyzes the rearrangement of -S-S- bonds in proteins.. Functionally, protein disulfide isomerase. Promotes the localization of acetylcholine receptors (AChRs) to the plasma membrane. The polypeptide is Protein disulfide isomerase CRELD1 (CRELD1) (Homo sapiens (Human)).